The primary structure comprises 148 residues: Large ribosomal subunit protein bL9 (148 aa).

This sequence belongs to the bacterial ribosomal protein bL9 family.

Functionally, binds to the 23S rRNA. This chain is Large ribosomal subunit protein bL9, found in Solibacter usitatus (strain Ellin6076).